A 517-amino-acid chain; its full sequence is UDP-N-acetylmuramoyl-L-alanyl-D-glutamate--2,6-diaminopimelate ligase (517 aa).

The UDP-N-acetyl-alpha-D-muramoyl-L-alanyl-D-glutamate site is built by leucine 34 and serine 36. 122–128 contributes to the ATP binding site; the sequence is GTSGKTT. UDP-N-acetyl-alpha-D-muramoyl-L-alanyl-D-glutamate is bound by residues 164-165, serine 191, and arginine 199; that span reads TT. Position 231 is an N6-carboxylysine (lysine 231). Meso-2,6-diaminopimelate-binding positions include arginine 394, 418–421, glycine 476, and glutamate 480; that span reads DNPR. The short motif at 418–421 is the Meso-diaminopimelate recognition motif element; sequence DNPR.

This sequence belongs to the MurCDEF family. MurE subfamily. Requires Mg(2+) as cofactor. Post-translationally, carboxylation is probably crucial for Mg(2+) binding and, consequently, for the gamma-phosphate positioning of ATP.

It localises to the cytoplasm. The catalysed reaction is UDP-N-acetyl-alpha-D-muramoyl-L-alanyl-D-glutamate + meso-2,6-diaminopimelate + ATP = UDP-N-acetyl-alpha-D-muramoyl-L-alanyl-gamma-D-glutamyl-meso-2,6-diaminopimelate + ADP + phosphate + H(+). Its pathway is cell wall biogenesis; peptidoglycan biosynthesis. Its function is as follows. Catalyzes the addition of meso-diaminopimelic acid to the nucleotide precursor UDP-N-acetylmuramoyl-L-alanyl-D-glutamate (UMAG) in the biosynthesis of bacterial cell-wall peptidoglycan. The polypeptide is UDP-N-acetylmuramoyl-L-alanyl-D-glutamate--2,6-diaminopimelate ligase (Corynebacterium glutamicum (strain ATCC 13032 / DSM 20300 / JCM 1318 / BCRC 11384 / CCUG 27702 / LMG 3730 / NBRC 12168 / NCIMB 10025 / NRRL B-2784 / 534)).